We begin with the raw amino-acid sequence, 270 residues long: Tryptophan synthase alpha chain (270 aa).

Catalysis depends on proton acceptor residues Glu-49 and Asp-60.

It belongs to the TrpA family. As to quaternary structure, tetramer of two alpha and two beta chains.

It catalyses the reaction (1S,2R)-1-C-(indol-3-yl)glycerol 3-phosphate + L-serine = D-glyceraldehyde 3-phosphate + L-tryptophan + H2O. The protein operates within amino-acid biosynthesis; L-tryptophan biosynthesis; L-tryptophan from chorismate: step 5/5. In terms of biological role, the alpha subunit is responsible for the aldol cleavage of indoleglycerol phosphate to indole and glyceraldehyde 3-phosphate. In Pseudomonas fluorescens (strain Pf0-1), this protein is Tryptophan synthase alpha chain.